A 326-amino-acid chain; its full sequence is Aldo-keto reductase family 1 member D1 (326 aa).

NADP(+) contacts are provided by residues 22–26 (GLGTY) and Asp52. Tyr26 is a binding site for substrate. Substrate is bound by residues Tyr57, Trp88, Glu119, and Tyr131. Tyr57 serves as the catalytic Proton donor. Residues 168 to 169 (SN), Gln192, and 219 to 224 (YSPLGT) each bind NADP(+). Residue Trp230 participates in substrate binding. 273–283 (KSTTPERIKEN) is an NADP(+) binding site.

It belongs to the aldo/keto reductase family. The N-terminus is blocked.

Its subcellular location is the cytoplasm. The enzyme catalyses 5beta-cholestan-3-one + NADP(+) = cholest-4-en-3-one + NADPH + H(+). It catalyses the reaction 4,5beta-dihydrocortisone + NADP(+) = cortisone + NADPH + H(+). The catalysed reaction is cortisol + NADPH + H(+) = 5beta-dihydrocortisol + NADP(+). It carries out the reaction corticosterone + NADPH + H(+) = 5beta-dihydrocorticosterone + NADP(+). The enzyme catalyses 7alpha,12alpha-dihydroxycholest-4-en-3-one + NADPH + H(+) = 7alpha,12alpha-dihydroxy-5beta-cholestan-3-one + NADP(+). It catalyses the reaction 7alpha-hydroxycholest-4-en-3-one + NADPH + H(+) = 7alpha-hydroxy-5beta-cholestan-3-one + NADP(+). The catalysed reaction is epitestosterone + NADPH + H(+) = 5beta-dihydroepitestosterone + NADP(+). It carries out the reaction androst-4-ene-3,17-dione + NADPH + H(+) = 5beta-androstane-3,17-dione + NADP(+). The enzyme catalyses progesterone + NADPH + H(+) = 5beta-pregnan-3,20-dione + NADP(+). It catalyses the reaction 21-hydroxyprogesterone + NADPH + H(+) = 5beta-dihydrodeoxycorticosterone + NADP(+). The catalysed reaction is aldosterone + NADPH + H(+) = 5beta-dihydroaldosterone + NADP(+). It carries out the reaction 17beta-hydroxyandrosta-1,4-dien-3-one + NADPH + H(+) = 17beta-hydroxy-5beta-androst-1-en-3-one + NADP(+). The enzyme catalyses 17beta-hydroxyestr-4-en-3-one + NADPH + H(+) = 17beta-hydroxy-5beta-estran-3-one + NADP(+). It catalyses the reaction 5beta-dihydrotestosterone + NADP(+) = testosterone + NADPH + H(+). The catalysed reaction is androst-4-ene-3,11,17-trione + NADPH + H(+) = 17beta-hydroxyandrost-4-ene-3,11-dione + NADP(+). With respect to regulation, subject to inhibition by high substrate concentrations. Inhibited by testosterone concentrations above 10 uM. Inhibited by the primary and secondary bile acids chenodeoxycholic acid and ursodeoxycholic acid. Its function is as follows. Catalyzes the stereospecific NADPH-dependent reduction of the C4-C5 double bond of bile acid intermediates and steroid hormones carrying a delta(4)-3-one structure to yield an A/B cis-ring junction. This cis-configuration is crucial for bile acid biosynthesis and plays important roles in steroid metabolism. Capable of reducing a broad range of delta-(4)-3-ketosteroids from C18 (such as, 17beta-hydroxyestr-4-en-3-one) to C27 (such as, 7alpha-hydroxycholest-4-en-3-one). This chain is Aldo-keto reductase family 1 member D1 (Akr1d1), found in Rattus norvegicus (Rat).